Here is a 245-residue protein sequence, read N- to C-terminus: MAEIHTPYSSLKKLLSLLNGFVAVSGIILVGLGIGGKCGGASLTNVLGLSSAYLLHVGNLCLVMGCITVLLGCAGWYGATKESRGTLLFCILSMVIVLIMEVTAATVVLLFFPIVGDVALEHTFVTLRKNYRGYNEPDDYSTQWNLVMEKLKCCGVNNYTDFSGSSFEMTTGHTYPRSCCKSIGSVSCDGRDVSPNVIHQKGCFHKLLKITKTQSFTLSGSSLGAAVIQRWGSRYVAQAGLELLA.

The Cytoplasmic portion of the chain corresponds to M1 to K13. A helical transmembrane segment spans residues L14–I34. The Extracellular segment spans residues G35–K37. The chain crosses the membrane as a helical span at residues C38–G58. Residue N59 is a topological domain, cytoplasmic. Residues L60–T80 traverse the membrane as a helical segment. The Extracellular portion of the chain corresponds to K81–M94. The helical transmembrane segment at V95 to V115 threads the bilayer. Residues G116–A245 are Cytoplasmic-facing.

This sequence belongs to the tetraspanin (TM4SF) family. In terms of tissue distribution, broadly expressed in most human tissues and cell lines including neural and bone marrow derived tissues.

It localises to the membrane. The chain is Tetraspanin-16 (TSPAN16) from Homo sapiens (Human).